Reading from the N-terminus, the 362-residue chain is Photosystem II protein D1 3 (362 aa).

Transmembrane regions (helical) follow at residues 29-46, 118-133, and 142-156; these read YVGWFGVLMIPTLLSATI, HFLIGVFCYLGREWEL, and WICIAYSAPVAAATA. A chlorophyll a-binding site is contributed by H118. Y126 is a binding site for pheophytin a. 2 residues coordinate [CaMn4O5] cluster: D170 and E189. The helical transmembrane segment at 197 to 218 threads the bilayer; it reads FHMLGVAGVFGGALISAMHGSL. Residue H198 coordinates chlorophyll a. Residues H215 and 264–265 each bind a quinone; that span reads AF. H215 is a binding site for Fe cation. H274 contributes to the Fe cation binding site. Residues 276–290 traverse the membrane as a helical segment; sequence IMAAFPVIGIWFTSL. 4 residues coordinate [CaMn4O5] cluster: H334, E335, D344, and A346. Positions 347 to 362 are excised as a propeptide; the sequence is GTESAPVAVSTAKVGG.

It belongs to the reaction center PufL/M/PsbA/D family. In terms of assembly, PSII is composed of 1 copy each of membrane proteins PsbA, PsbB, PsbC, PsbD, PsbE, PsbF, PsbH, PsbI, PsbJ, PsbK, PsbL, PsbM, PsbT, PsbX, Psb30/Ycf12, peripheral proteins PsbO, CyanoQ (PsbQ), PsbU, PsbV and a large number of cofactors. It forms dimeric complexes. The D1/D2 heterodimer binds P680, chlorophylls that are the primary electron donor of PSII, and subsequent electron acceptors. It shares a non-heme iron and each subunit binds pheophytin, quinone, additional chlorophylls, carotenoids and lipids. D1 provides most of the ligands for the Mn4-Ca-O5 cluster of the oxygen-evolving complex (OEC). There is also a Cl(-1) ion associated with D1 and D2, which is required for oxygen evolution. The PSII complex binds additional chlorophylls, carotenoids and specific lipids. serves as cofactor. In terms of processing, tyr-161 forms a radical intermediate that is referred to as redox-active TyrZ, YZ or Y-Z. C-terminally processed by CtpA; processing is essential to allow assembly of the oxygen-evolving complex and thus photosynthetic growth.

Its subcellular location is the cell inner membrane. It catalyses the reaction 2 a plastoquinone + 4 hnu + 2 H2O = 2 a plastoquinol + O2. Functionally, photosystem II (PSII) is a light-driven water:plastoquinone oxidoreductase that uses light energy to abstract electrons from H(2)O, generating O(2) and a proton gradient subsequently used for ATP formation. It consists of a core antenna complex that captures photons, and an electron transfer chain that converts photonic excitation into a charge separation. The D1/D2 (PsbA/PsbD) reaction center heterodimer binds P680, the primary electron donor of PSII as well as several subsequent electron acceptors. The chain is Photosystem II protein D1 3 from Gloeobacter violaceus (strain ATCC 29082 / PCC 7421).